A 466-amino-acid polypeptide reads, in one-letter code: Vimentin (466 aa).

Positions 1 to 13 (MSTRSVSSSSYRR) are enriched in low complexity. Residues 1–32 (MSTRSVSSSSYRRMFGGPGTGSRPSSTRSYVT) are disordered. S2 carries the post-translational modification N-acetylserine. Residues 2-95 (STRSVSSSSY…FSLADAINTE (94 aa)) are head. S5, S7, S8, S9, and S10 each carry phosphoserine. S7 is a glycosylation site (O-linked (GlcNAc) serine; alternate). T20 is modified (phosphothreonine). Residues 21–32 (GSRPSSTRSYVT) show a composition bias toward low complexity. Phosphoserine occurs at positions 25 and 26. An O-linked (GlcNAc) threonine glycan is attached at T33. 6 positions are modified to phosphoserine: S34, S39, S42, S47, S49, and S51. A glycan (O-linked (GlcNAc) serine; alternate) is linked at S34. Y53 bears the Phosphotyrosine mark. A phosphoserine mark is found at S55 and S56. Y61 is subject to Phosphotyrosine. A phosphoserine mark is found at S66, S72, S73, S83, and S87. The interval 96–131 (FKNTRTNEKVELQELNDRFANYIDKVRFLEQQNKIL) is coil 1A. Positions 96 to 131 (FKNTRTNEKVELQELNDRFANYIDKVRFLEQQNKIL) form a coiled coil. Residues 103 to 411 (EKVELQELND…KLLEGEESRI (309 aa)) form the IF rod domain. Residue K104 forms a Glycyl lysine isopeptide (Lys-Gly) (interchain with G-Cter in SUMO2) linkage. Residue Y117 is modified to Phosphotyrosine. Residues K120, K129, and K139 each carry the N6-acetyllysine; alternate modification. K120 and K129 each carry N6-succinyllysine; alternate. Residues K120, K129, and K139 each participate in a glycyl lysine isopeptide (Lys-Gly) (interchain with G-Cter in SUMO2); alternate cross-link. Positions 132–153 (LAELEQLKGQGKSRLGDLYEEE) are linker 1. S144 carries the post-translational modification Phosphoserine. Positions 154 to 245 (MRELRRQVDQ…KLHDEEIQEL (92 aa)) form a coiled coil. Residues 154–245 (MRELRRQVDQ…KLHDEEIQEL (92 aa)) form a coil 1B region. At K168 the chain carries N6-acetyllysine. Position 188 is an N6-acetyllysine; alternate (K188). At K188 the chain carries N6-succinyllysine; alternate. Residue S214 is modified to Phosphoserine. K223 carries the post-translational modification N6-acetyllysine; alternate. Residue K223 forms a Glycyl lysine isopeptide (Lys-Gly) (interchain with G-Cter in SUMO2); alternate linkage. A Phosphoserine modification is found at S226. K235 carries the post-translational modification N6-acetyllysine. The interval 246–268 (QAQIQDQHVQIDMDVSKPDLTAA) is linker 12. Residue K262 forms a Glycyl lysine isopeptide (Lys-Gly) (interchain with G-Cter in SUMO2) linkage. The tract at residues 269–407 (LRDVRQQYES…ATYRKLLEGE (139 aa)) is coil 2. K294 is subject to N6-acetyllysine; alternate. K294 carries the post-translational modification N6-succinyllysine; alternate. K294 is covalently cross-linked (Glycyl lysine isopeptide (Lys-Gly) (interchain with G-Cter in SUMO2); alternate). Residue S299 is modified to Phosphoserine. A coiled-coil region spans residues 303–407 (NRNNDALRQA…ATYRKLLEGE (105 aa)). K313 participates in a covalent cross-link: Glycyl lysine isopeptide (Lys-Gly) (interchain with G-Cter in SUMO2). S325 bears the Phosphoserine mark. The [IL]-x-C-x-x-[DE] motif motif lies at 326–329 (LTCE). K373 carries the N6-acetyllysine; alternate modification. K373 participates in a covalent cross-link: Glycyl lysine isopeptide (Lys-Gly) (interchain with G-Cter in SUMO2); alternate. The segment at 408 to 466 (ESRIALPLPNFSSLNLRETNLDSLPLVDTHSKRTLLIKTVETRDGQVINETSQHHDDLE) is tail. Phosphoserine is present on residues S409, S419, and S420. Position 426 is a phosphothreonine (T426). S430 carries the post-translational modification Phosphoserine. T436 carries the post-translational modification Phosphothreonine. S438 bears the Phosphoserine mark. K439 participates in a covalent cross-link: Glycyl lysine isopeptide (Lys-Gly) (interchain with G-Cter in SUMO2). K445 bears the N6-acetyllysine; alternate mark. N6-succinyllysine; alternate is present on K445. K445 is covalently cross-linked (Glycyl lysine isopeptide (Lys-Gly) (interchain with G-Cter in SUMO2); alternate). A Glycyl lysine isopeptide (Lys-Gly) (interchain with G-Cter in SUMO1); alternate cross-link involves residue K445. Phosphothreonine is present on residues T446 and T458. Phosphoserine is present on S459.

Belongs to the intermediate filament family. As to quaternary structure, homomer assembled from elementary dimers. Identified in complexes that contain VIM, EZR, AHNAK, BFSP1, BFSP2, ANK2, PLEC, PRX and spectrin. Interacts with BCAS3. Interacts with LGSN. Interacts with SYNM. Interacts (via rod region) with PLEC (via CH 1 domain). Interacts with STK33. Interacts with LARP6. Interacts with RAB8B. Interacts with TOR1A; the interaction associates TOR1A with the cytoskeleton. Interacts with TOR1AIP1. Interacts with TOR1AIP1. Interacts with DIAPH1. Interacts with EPPK1; interaction is dependent of higher-order structure of intermediate filament. Interacts with the non-receptor tyrosine kinase SRMS; the interaction leads to phosphorylation of VIM. Interacts with NOD2. Interacts (via head region) with CORO1C. Interacts with HDGF. Interacts with PRKCE (via phorbol-ester/DAG-type 2 domain). Interacts with BFSP2. Interacts with PPL. Interacts with PKP1 and PKP2. Interacts with SCRIB (via PDZ domains); the interaction protects SCRIB from proteasomal degradation and facilitates SCRIB localization to intermediate filaments, the interaction is reduced by cell contact inhibition. Filament disassembly during mitosis is promoted by phosphorylation at Ser-55 as well as by nestin. One of the most prominent phosphoproteins in various cells of mesenchymal origin. Phosphorylation is enhanced during cell division, at which time vimentin filaments are significantly reorganized. Phosphorylation by PKN1 inhibits the formation of filaments. Phosphorylated at Ser-56 by CDK5 during neutrophil secretion in the cytoplasm. Phosphorylated by STK33. Phosphorylated on tyrosine residues by SRMS. In terms of processing, O-glycosylated during cytokinesis at sites identical or close to phosphorylation sites, this interferes with the phosphorylation status. Post-translationally, S-nitrosylation is induced by interferon-gamma and oxidatively-modified low-densitity lipoprotein (LDL(ox)) possibly implicating the iNOS-S100A8/9 transnitrosylase complex.

The protein resides in the cytoplasm. Its subcellular location is the cytoskeleton. It is found in the nucleus matrix. The protein localises to the cell membrane. Vimentins are class-III intermediate filaments found in various non-epithelial cells, especially mesenchymal cells. Vimentin is attached to the nucleus, endoplasmic reticulum, and mitochondria, either laterally or terminally. Plays a role in cell directional movement, orientation, cell sheet organization and Golgi complex polarization at the cell migration front. Protects SCRIB from proteasomal degradation and facilitates its localization to intermediate filaments in a cell contact-mediated manner. Its function is as follows. Involved with LARP6 in the stabilization of type I collagen mRNAs for CO1A1 and CO1A2. The protein is Vimentin (VIM) of Canis lupus familiaris (Dog).